Here is a 731-residue protein sequence, read N- to C-terminus: 1,4-alpha-glucan branching enzyme GlgB (731 aa).

Cysteines 193 and 617 form a disulfide. Asp411 acts as the Nucleophile in catalysis. Glu464 acts as the Proton donor in catalysis.

It belongs to the glycosyl hydrolase 13 family. GlgB subfamily. Monomer.

The catalysed reaction is Transfers a segment of a (1-&gt;4)-alpha-D-glucan chain to a primary hydroxy group in a similar glucan chain.. The protein operates within glycan biosynthesis; glycogen biosynthesis. It participates in capsule biogenesis; capsule polysaccharide biosynthesis. Its function is as follows. Essential enzyme that catalyzes the formation of the alpha-1,6-glucosidic linkages in glucan chains by scission of a 1,4-alpha-linked oligosaccharide from growing alpha-1,4-glucan chains and the subsequent attachment of the oligosaccharide to the alpha-1,6 position. Is involved in the biosynthesis of both glycogen and capsular alpha-D-glucan. The polypeptide is 1,4-alpha-glucan branching enzyme GlgB (glgB) (Mycobacterium tuberculosis (strain CDC 1551 / Oshkosh)).